The primary structure comprises 180 residues: uncharacterized protein (180 aa).

Positions 45 to 180 (FVFSQVRTLD…GNRCAFWYAN (136 aa)) constitute an N-acetyltransferase domain.

It belongs to the acetyltransferase family. Ycf52 subfamily.

This is an uncharacterized protein from Prochlorococcus marinus (strain SARG / CCMP1375 / SS120).